Consider the following 329-residue polypeptide: Ankyrin repeat and SOCS box protein 5 (329 aa).

6 ANK repeats span residues Ala-69–Ala-98, Asp-102–Ala-131, Asp-135–Leu-164, Cys-167–Gln-196, His-200–Lys-229, and Tyr-232–Ala-261. The region spanning Met-278–Arg-329 is the SOCS box domain.

It belongs to the ankyrin SOCS box (ASB) family.

It participates in protein modification; protein ubiquitination. In terms of biological role, may be a substrate-recognition component of a SCF-like ECS (Elongin-Cullin-SOCS-box protein) E3 ubiquitin-protein ligase complex which mediates the ubiquitination and subsequent proteasomal degradation of target proteins. May play a role in the initiation of arteriogenesis. This is Ankyrin repeat and SOCS box protein 5 (ASB5) from Homo sapiens (Human).